The following is a 403-amino-acid chain: E2F transcription factor-like E2FE (403 aa).

Residues 34–99 mediate DNA binding; sequence RKQKSLGLLC…RAKNQYTWKG (66 aa). Residues 128-167 are disordered; that stretch reads VKGSDDEDDDEESSQPHSSSQTDSSKPGSLPQSSDPSKID. A compositionally biased stretch (low complexity) spans 142–152; it reads QPHSSSQTDSS. The segment covering 153–163 has biased composition (polar residues); that stretch reads KPGSLPQSSDP. Residues 169–250 mediate DNA binding; that stretch reads RREKSLGLLT…SRKPAFKWLG (82 aa). A disordered region spans residues 282–319; it reads VKRSKSSSSSQENATERRLKMKKHSTPESSYNKSFDVH.

It belongs to the E2F/DP family. In terms of tissue distribution, expressed exclusively in mitotically dividing cells. Highly expressed in young leaves and mature flowers. Lower expression in young stalk and in young and mature flowers.

Its subcellular location is the nucleus. Functionally, inhibitor of E2F-dependent activation of gene expression. Binds specifically the E2 recognition site without interacting with DP proteins and prevents transcription activation by E2F/DP heterodimers. Controls the timing of endocycle onset and inhibits endoreduplication. The protein is E2F transcription factor-like E2FE (E2FE) of Arabidopsis thaliana (Mouse-ear cress).